The primary structure comprises 170 residues: Putative zinc finger protein 542 (170 aa).

Positions 1–42 constitute a KRAB domain; it reads MLENYQNLVWLGLSISKSVISLLEKRKLPWIMAKEEIRGPLP. C2H2-type zinc fingers lie at residues 98–120 and 126–148; these read NVCK…KRNH and NQCL…QRIH. Residues 154–170 form a C2H2-type 3; degenerate zinc finger; that stretch reads YKCNECIKTFNQRAHLT.

It belongs to the krueppel C2H2-type zinc-finger protein family.

It localises to the nucleus. Its function is as follows. May be involved in transcriptional regulation. The polypeptide is Putative zinc finger protein 542 (ZNF542P) (Homo sapiens (Human)).